The chain runs to 293 residues: MDSKLRSLLSDHSRYVESFRLFLQNSTEHQCMQHFIESKLPNIISSIGNDKPVIDVLGVGSGSGEIDLQMIAKIQARWPGVPINNQIVEPSAEQIFGYKERVAKAPNLENVTFSWHRQTSSEFESQVNEDKQMRKFDFIHMIQMLYYVKDVLGTLKFFKSCLAPSGKLLIILVSGNSGWATLWKKYGQRLPLNDLCLYITAGDIAEMLSSMGARFQSHELQSDMDITECFIEGDRDGELLLDFLTETCDFKRNAPADLRDQIICDLKSPGCSTTKDGKVIFNNNLSVIVVEAD.

E28 contacts substrate. 5 residues coordinate S-adenosyl-L-methionine: G60, E89, Q94, S120, and I142. N283 is a substrate binding site.

This sequence belongs to the class I-like SAM-binding methyltransferase superfamily. HNMT family. As to quaternary structure, monomer.

It localises to the cytoplasm. The enzyme catalyses histamine + S-adenosyl-L-methionine = N(tau)-methylhistamine + S-adenosyl-L-homocysteine + H(+). In terms of biological role, inactivates histamine by N-methylation. Plays an important role in degrading histamine and in regulating the airway response to histamine. The polypeptide is Histamine N-methyltransferase A (hnmt-a) (Xenopus laevis (African clawed frog)).